A 124-amino-acid polypeptide reads, in one-letter code: uncharacterized protein (124 aa).

The dksA C4-type; degenerate zinc finger occupies 73 to 94 (CEETGAPIPLAKLAVLPTARTA).

This is an uncharacterized protein from Bacillus subtilis (strain 168).